Reading from the N-terminus, the 117-residue chain is Ig heavy chain V region MOPC 173 (117 aa).

An Ig-like domain is found at 1 to 116 (EVKLLESGGP…WGQGTSVTVS (116 aa)). An intrachain disulfide couples C22 to C96.

The sequence is that of Ig heavy chain V region MOPC 173 from Mus musculus (Mouse).